The sequence spans 55 residues: Large ribosomal subunit protein bL33 (55 aa).

This sequence belongs to the bacterial ribosomal protein bL33 family.

This chain is Large ribosomal subunit protein bL33, found in Escherichia coli (strain K12 / DH10B).